Consider the following 108-residue polypeptide: Complement inhibitor CirpT2 (108 aa).

Residues 1–19 (MRTLVASLCVFAVFSAVCC) form the signal peptide. 4 disulfides stabilise this stretch: C40/C64, C59/C98, C76/C99, and C85/C104.

The protein belongs to the CirpT family. In terms of tissue distribution, expressed in salivary glands.

It is found in the secreted. In terms of biological role, complement inhibitor. Prevents complement-mediated activation of C5 by sterically preventing direct binding of C5 to its convertase (binding with domains MG4 and MG5). Binds C5 at a different binding site than the other tick complement inhibitors OmCI and RaCI3, and the drug eculizumab. Inhibits the complement in human, rat and guinea pig, and also shows a reduced inhibition in rabbit and pig. In Dermacentor andersoni (Rocky mountain wood tick), this protein is Complement inhibitor CirpT2.